The following is a 478-amino-acid chain: Serine carboxypeptidase-like 33 (478 aa).

Residues 1-33 (MNLTLPMKKQKFLLIISLLILLSLLHQDYHIEA) form the signal peptide. 3 disulfide bridges follow: C95–C361, C257–C268, and C292–C330. N114 and N146 each carry an N-linked (GlcNAc...) asparagine glycan. S188 is a catalytic residue. 3 N-linked (GlcNAc...) asparagine glycosylation sites follow: N263, N295, and N362. Catalysis depends on residues D398 and H451.

The protein belongs to the peptidase S10 family. Expressed in senescent leaves and flowers.

The protein resides in the secreted. Its function is as follows. Probable carboxypeptidase. In Arabidopsis thaliana (Mouse-ear cress), this protein is Serine carboxypeptidase-like 33 (SCPL33).